Here is a 77-residue protein sequence, read N- to C-terminus: Putative defensin-like protein 60 (77 aa).

The N-terminal stretch at 1-25 (MKMNITKSYVILFLVVVMTNSLSNS) is a signal peptide. 4 disulfide bridges follow: Cys41-Cys75, Cys45-Cys68, Cys54-Cys73, and Cys58-Cys74.

Belongs to the DEFL family.

It is found in the secreted. In Arabidopsis thaliana (Mouse-ear cress), this protein is Putative defensin-like protein 60.